Here is a 247-residue protein sequence, read N- to C-terminus: tRNA pseudouridine synthase A (247 aa).

The Nucleophile role is filled by aspartate 53. Tyrosine 111 contacts substrate.

It belongs to the tRNA pseudouridine synthase TruA family. In terms of assembly, homodimer.

It catalyses the reaction uridine(38/39/40) in tRNA = pseudouridine(38/39/40) in tRNA. Formation of pseudouridine at positions 38, 39 and 40 in the anticodon stem and loop of transfer RNAs. The sequence is that of tRNA pseudouridine synthase A from Lacticaseibacillus casei (strain BL23) (Lactobacillus casei).